The primary structure comprises 196 residues: Small ribosomal subunit protein uS4c (196 aa).

The segment at 22–42 (TRKTPKSGSNPKKKFHSGKKE) is disordered. Positions 89-169 (MRLDNILFRL…LPKHLTIDTL (81 aa)) constitute an S4 RNA-binding domain.

This sequence belongs to the universal ribosomal protein uS4 family. In terms of assembly, part of the 30S ribosomal subunit. Contacts protein S5. The interaction surface between S4 and S5 is involved in control of translational fidelity.

The protein resides in the plastid. It localises to the chloroplast. In terms of biological role, one of the primary rRNA binding proteins, it binds directly to 16S rRNA where it nucleates assembly of the body of the 30S subunit. Its function is as follows. With S5 and S12 plays an important role in translational accuracy. This is Small ribosomal subunit protein uS4c (rps4) from Melica altissima (Siberian melic grass).